Reading from the N-terminus, the 70-residue chain is Kappa-scoloptoxin(07)-Ssm2b (70 aa).

The N-terminal stretch at 1 to 19 (MLVFYALLFVSVFSSTVMG) is a signal peptide. The propeptide occupies 20 to 39 (ATIDKPILREAIEEIDVNKR).

Belongs to the scoloptoxin-07 family. Contains 3 disulfide bonds. Expressed by the venom gland.

It localises to the secreted. Functionally, inhibits voltage-gated potassium channels. The chain is Kappa-scoloptoxin(07)-Ssm2b from Scolopendra mutilans (Chinese red-headed centipede).